The primary structure comprises 710 residues: Elongation factor G (710 aa).

In terms of domain architecture, tr-type G spans 8–297 (ERVRNIGIAA…AVVDYLPSPI (290 aa)). GTP-binding positions include 17–24 (AHIDAGKT), 96–100 (DTPGH), and 150–153 (NKMD).

This sequence belongs to the TRAFAC class translation factor GTPase superfamily. Classic translation factor GTPase family. EF-G/EF-2 subfamily.

The protein localises to the cytoplasm. Catalyzes the GTP-dependent ribosomal translocation step during translation elongation. During this step, the ribosome changes from the pre-translocational (PRE) to the post-translocational (POST) state as the newly formed A-site-bound peptidyl-tRNA and P-site-bound deacylated tRNA move to the P and E sites, respectively. Catalyzes the coordinated movement of the two tRNA molecules, the mRNA and conformational changes in the ribosome. The sequence is that of Elongation factor G from Synechococcus sp. (strain JA-3-3Ab) (Cyanobacteria bacterium Yellowstone A-Prime).